Here is a 101-residue protein sequence, read N- to C-terminus: Trp operon repressor homolog (101 aa).

A DNA-binding region spans residues 59–82; the sequence is QREIAQKYGVSIAQITRGSNALKA.

This sequence belongs to the TrpR family. As to quaternary structure, homodimer.

Its subcellular location is the cytoplasm. In terms of biological role, this protein is an aporepressor. When complexed with L-tryptophan it binds the operator region of the trp operon and prevents the initiation of transcription. This chain is Trp operon repressor homolog, found in Chlamydia caviae (strain ATCC VR-813 / DSM 19441 / 03DC25 / GPIC) (Chlamydophila caviae).